Here is a 952-residue protein sequence, read N- to C-terminus: Isoleucine--tRNA ligase (952 aa).

The 'HIGH' region signature appears at 58–68 (PYANGDIHIGH). L-isoleucyl-5'-AMP is bound at residue E576. Residues 617–621 (KMSKS) carry the 'KMSKS' region motif. ATP is bound at residue K620. 4 residues coordinate Zn(2+): C915, C918, C935, and C938.

Belongs to the class-I aminoacyl-tRNA synthetase family. IleS type 1 subfamily. As to quaternary structure, monomer. Requires Zn(2+) as cofactor.

Its subcellular location is the cytoplasm. It carries out the reaction tRNA(Ile) + L-isoleucine + ATP = L-isoleucyl-tRNA(Ile) + AMP + diphosphate. Functionally, catalyzes the attachment of isoleucine to tRNA(Ile). As IleRS can inadvertently accommodate and process structurally similar amino acids such as valine, to avoid such errors it has two additional distinct tRNA(Ile)-dependent editing activities. One activity is designated as 'pretransfer' editing and involves the hydrolysis of activated Val-AMP. The other activity is designated 'posttransfer' editing and involves deacylation of mischarged Val-tRNA(Ile). This Aliivibrio fischeri (strain ATCC 700601 / ES114) (Vibrio fischeri) protein is Isoleucine--tRNA ligase.